The sequence spans 705 residues: Ovotransferrin (705 aa).

The N-terminal stretch at 1–19 (MKLILCTVLSLGIAAVCFA) is a signal peptide. 2 Transferrin-like domains span residues 26–352 (IRWC…SMRK) and 364–689 (IQWC…SLKT). Intrachain disulfides connect Cys-29–Cys-64 and Cys-39–Cys-55. Asp-79 and Tyr-111 together coordinate Fe(3+). 4 disulfides stabilise this stretch: Cys-134/Cys-216, Cys-179/Cys-193, Cys-190/Cys-201, and Cys-247/Cys-261. Hydrogencarbonate is bound by residues Thr-136, Arg-140, Ala-142, and Gly-143. Tyr-210 is a Fe(3+) binding site. His-269 is a binding site for Fe(3+). Residues 352–360 (KDQLTPSPR) are connecting region. 2 cysteine pairs are disulfide-bonded: Cys-367–Cys-399 and Cys-377–Cys-390. Fe(3+)-binding residues include Asp-414 and Tyr-450. 7 disulfides stabilise this stretch: Cys-424–Cys-699, Cys-440–Cys-662, Cys-473–Cys-549, Cys-497–Cys-690, Cys-507–Cys-521, Cys-518–Cys-532, and Cys-589–Cys-603. Hydrogencarbonate contacts are provided by Thr-475, Arg-479, Ala-481, and Gly-482. Asn-492 carries N-linked (GlcNAc...) asparagine glycosylation. Position 543 (Tyr-543) interacts with Fe(3+). A Fe(3+)-binding site is contributed by His-611.

The protein belongs to the transferrin family. Monomer. In terms of processing, different forms of hen transferrin are distinguished by their carbohydrate composition. Ovotransferrin and embryo serum transferrin but not adult serum transferrin, have bisecting N-acetylglucosamine. Transferrin secreted by embryo hepatocytes in primary culture is marked by the presence of (alpha1-6) fucosylation of the core N-acetylglucosamine. Serum transferrins also differ in the number of attached neuraminic acid residues. In both embryo forms, sialylation occurs on the Man (alpha 1-3)-linked antennae. Expressed in the magnum of the oviduct (at protein level).

It is found in the secreted. In terms of biological role, transferrins are iron binding transport proteins which can bind two Fe(3+) ions in association with the binding of an anion, usually bicarbonate. Responsible for the transport of iron from sites of absorption and heme degradation to those of storage and utilization. There are two forms of hen transferrin, ovotransferrin, found in the ovoducts and, serum transferrin, secreted by the liver. Serum transferrin may also have a role in stimulating cell proliferation and is regulated by iron levels. Ovotransferrin has a bacteriostatic function and, is not controlled by iron levels. The polypeptide is Ovotransferrin (Gallus gallus (Chicken)).